Reading from the N-terminus, the 420-residue chain is Inheritance of peroxisomes protein 1 (420 aa).

The segment covering Met-1–Lys-10 has biased composition (basic and acidic residues). Disordered regions lie at residues Met-1 to Arg-75 and Ser-273 to Asp-309. A compositionally biased stretch (low complexity) spans Leu-30–Asn-39. Polar residues predominate over residues Asp-45–Ser-56. The residue at position 273 (Ser-273) is a Phosphoserine. The span at Asn-295 to Asp-309 shows a compositional bias: acidic residues.

Belongs to the INP1 family. Interacts with PEX25, PEX30 and VPS1.

It localises to the peroxisome membrane. In terms of biological role, required for peroxisome inheritance. This chain is Inheritance of peroxisomes protein 1 (INP1), found in Saccharomyces cerevisiae (strain ATCC 204508 / S288c) (Baker's yeast).